Here is a 545-residue protein sequence, read N- to C-terminus: MTTNYIFVTGGVVSSLGKGIAAASLAAILEARGLNVTIMKLDPYINVDPGTMSPIQHGEVFVTEDGAETDLDLGHYERFIRTKMSRRNNFTTGRIYSDVLRKERRGDYLGATVQVIPHITNAIKERVLEGGEGHDVVLVEIGGTVGDIESLPFLEAIRQLAVDIGREHALFMHLTLVPYLAAAGEVKTKPTQHSVKELLSIGIQPDILICRSDRAVPANERAKIALFCNVPEKAVISMKDVDSIYKIPGLLKSQGLDDYICKRFSLNCPEANLSEWEQVIYEEANPAGEVTIGMVGKYIELPDAYKSVIEALKHGGLKNRVTVNIKLIDSQDVETRGVEILKDLDAILIPGGFGYRGVEGKIATARYARENNIPYLGICLGMQVALIEFARNVAGMDNANSTEFVPDCKYPVVALITEWRDEDGNVEVRSEKSDLGGTMRLGAQQCQLSDDSLVRQLYGASTIVERHRHRYEVNNMLLKQIEAAGLRVAGRSGDDQLVEIIEVPNHPWFVACQFHPEFTSTPRDGHPLFAGFVKAANEHQKRQAK.

The amidoligase domain stretch occupies residues 2 to 266; the sequence is TTNYIFVTGG…DDYICKRFSL (265 aa). Serine 14 contributes to the CTP binding site. Serine 14 is a UTP binding site. ATP-binding positions include 15-20 and aspartate 72; that span reads SLGKGI. Mg(2+)-binding residues include aspartate 72 and glutamate 140. Residues 147–149, 187–192, and lysine 223 each bind CTP; these read DIE and KTKPTQ. Residues 187–192 and lysine 223 contribute to the UTP site; that span reads KTKPTQ. 239–241 lines the ATP pocket; that stretch reads KDV. In terms of domain architecture, Glutamine amidotransferase type-1 spans 291–542; the sequence is TIGMVGKYIE…VKAANEHQKR (252 aa). Glycine 352 is a binding site for L-glutamine. The active-site Nucleophile; for glutamine hydrolysis is the cysteine 379. L-glutamine is bound by residues 380–383, glutamate 403, and arginine 470; that span reads LGMQ. Residues histidine 515 and glutamate 517 contribute to the active site.

This sequence belongs to the CTP synthase family. Homotetramer.

The catalysed reaction is UTP + L-glutamine + ATP + H2O = CTP + L-glutamate + ADP + phosphate + 2 H(+). It carries out the reaction L-glutamine + H2O = L-glutamate + NH4(+). The enzyme catalyses UTP + NH4(+) + ATP = CTP + ADP + phosphate + 2 H(+). The protein operates within pyrimidine metabolism; CTP biosynthesis via de novo pathway; CTP from UDP: step 2/2. Its activity is regulated as follows. Allosterically activated by GTP, when glutamine is the substrate; GTP has no effect on the reaction when ammonia is the substrate. The allosteric effector GTP functions by stabilizing the protein conformation that binds the tetrahedral intermediate(s) formed during glutamine hydrolysis. Inhibited by the product CTP, via allosteric rather than competitive inhibition. Functionally, catalyzes the ATP-dependent amination of UTP to CTP with either L-glutamine or ammonia as the source of nitrogen. Regulates intracellular CTP levels through interactions with the four ribonucleotide triphosphates. The protein is CTP synthase of Salmonella typhi.